The sequence spans 506 residues: Carboxyl-terminal PDZ ligand of neuronal nitric oxide synthase protein (506 aa).

Positions F26 to G196 constitute a PID domain. Disordered stretches follow at residues H175–P224 and D241–E260. A phosphoserine mark is found at S188, S192, and S195. Residues T203 to A213 are compositionally biased toward low complexity. S266 bears the Phosphoserine mark. The stretch at A322–L363 forms a coiled coil. 4 positions are modified to phosphoserine: S371, S374, S401, and S417. Positions Q494–V506 are interaction with NOS1. The PDZ-binding motif lies at I504 to V506.

Interacts with the PDZ domain of NOS1 or the second PDZ domain of DLG4 through its C-terminus. Interacts with RASD1 and SYN1, SYN2 and SYN3 via its PID domain. Forms a ternary complex with NOS1 and RASD1. Forms a ternary complex with NOS1 and SYN1. In terms of tissue distribution, expressed in kidney glomeruli podocytes.

The protein localises to the cell projection. Its subcellular location is the filopodium. The protein resides in the podosome. Its function is as follows. Adapter protein involved in neuronal nitric-oxide (NO) synthesis regulation via its association with nNOS/NOS1. The complex formed with NOS1 and synapsins is necessary for specific NO and synapsin functions at a presynaptic level. Mediates an indirect interaction between NOS1 and RASD1 leading to enhance the ability of NOS1 to activate RASD1. Competes with DLG4 for interaction with NOS1, possibly affecting NOS1 activity by regulating the interaction between NOS1 and DLG4. In kidney podocytes, plays a role in podosomes and filopodia formation through CDC42 activation. The sequence is that of Carboxyl-terminal PDZ ligand of neuronal nitric oxide synthase protein from Homo sapiens (Human).